The sequence spans 406 residues: MGDELHNRLLHQNDGTKDAILYKIIESLVCSICHDYMFVPMMTPCGHNYCYGCLNTWFASNTQKELACPQCRSDITTIPALNTTLQQYLSFILEKLRDQNDESFKKLLTTKTKEENDYKNDKEKDTLFDKVFKNSALAVADDSDDGITRCSNCHWELDPDEVEDGNVCPHCNARIRNYAGGRDEFDEEEYSEGELDEIRESMRRRRENRFASTNPFANRDDVSSEDDDSSEEEPMREHIPLGRWARSHNRSIAVDAVDDEDDEEEDEEEEEEMDSDLKDFIEDDEDDEDEDGSRRNLVLSALKNRHVIITDDEEEEQRRHATEEEDRDSDFYEHNDDGFVSGDSLDEDQKEVTRIQSSSDSEDRSLSYSGSSDVKDNNDDNTEELDDPQPKRQKRFRVVLGDSDDE.

The segment at 30–72 adopts an RING-type zinc-finger fold; that stretch reads CSICHDYMFVPMMTPCGHNYCYGCLNTWFASNTQKELACPQCR. A phosphoserine mark is found at serine 143 and serine 191. A disordered region spans residues 209-406; the sequence is RFASTNPFAN…RVVLGDSDDE (198 aa). 3 stretches are compositionally biased toward acidic residues: residues 223–232, 256–274, and 281–291; these read SSEDDDSSEE, AVDD…EEMD, and IEDDEDDEDED. Position 310 is a phosphothreonine (threonine 310). Serine 403 is subject to Phosphoserine.

As to quaternary structure, interacts with POB3 and SPT16.

The protein resides in the nucleus. This is RING finger protein PSH1 (PSH1) from Saccharomyces cerevisiae (strain ATCC 204508 / S288c) (Baker's yeast).